Reading from the N-terminus, the 559-residue chain is Dihydroxy-acid dehydratase (559 aa).

Cysteine 56 is a [2Fe-2S] cluster binding site. A Mg(2+)-binding site is contributed by aspartate 88. Cysteine 129 lines the [2Fe-2S] cluster pocket. The Mg(2+) site is built by aspartate 130 and lysine 131. Lysine 131 is subject to N6-carboxylysine. Cysteine 198 is a [2Fe-2S] cluster binding site. Mg(2+) is bound at residue glutamate 449. The active-site Proton acceptor is the serine 475.

Belongs to the IlvD/Edd family. Homodimer. Requires [2Fe-2S] cluster as cofactor. The cofactor is Mg(2+).

The catalysed reaction is (2R)-2,3-dihydroxy-3-methylbutanoate = 3-methyl-2-oxobutanoate + H2O. It carries out the reaction (2R,3R)-2,3-dihydroxy-3-methylpentanoate = (S)-3-methyl-2-oxopentanoate + H2O. The protein operates within amino-acid biosynthesis; L-isoleucine biosynthesis; L-isoleucine from 2-oxobutanoate: step 3/4. Its pathway is amino-acid biosynthesis; L-valine biosynthesis; L-valine from pyruvate: step 3/4. Functions in the biosynthesis of branched-chain amino acids. Catalyzes the dehydration of (2R,3R)-2,3-dihydroxy-3-methylpentanoate (2,3-dihydroxy-3-methylvalerate) into 2-oxo-3-methylpentanoate (2-oxo-3-methylvalerate) and of (2R)-2,3-dihydroxy-3-methylbutanoate (2,3-dihydroxyisovalerate) into 2-oxo-3-methylbutanoate (2-oxoisovalerate), the penultimate precursor to L-isoleucine and L-valine, respectively. This is Dihydroxy-acid dehydratase from Ruthia magnifica subsp. Calyptogena magnifica.